The primary structure comprises 265 residues: Indole-3-glycerol phosphate synthase (265 aa).

The protein belongs to the TrpC family.

It carries out the reaction 1-(2-carboxyphenylamino)-1-deoxy-D-ribulose 5-phosphate + H(+) = (1S,2R)-1-C-(indol-3-yl)glycerol 3-phosphate + CO2 + H2O. The protein operates within amino-acid biosynthesis; L-tryptophan biosynthesis; L-tryptophan from chorismate: step 4/5. In Xanthomonas euvesicatoria pv. vesicatoria (strain 85-10) (Xanthomonas campestris pv. vesicatoria), this protein is Indole-3-glycerol phosphate synthase.